Reading from the N-terminus, the 418-residue chain is CinA-like protein (418 aa).

It belongs to the CinA family.

The protein is CinA-like protein of Cytophaga hutchinsonii (strain ATCC 33406 / DSM 1761 / CIP 103989 / NBRC 15051 / NCIMB 9469 / D465).